Reading from the N-terminus, the 308-residue chain is Beta-1,3-galactosyltransferase 5 (308 aa).

The Cytoplasmic segment spans residues 1 to 7; it reads MAHMKTR. Residues 8–25 form a helical; Signal-anchor for type II membrane protein membrane-spanning segment; the sequence is LVYASILMMGALCLYFSM. Residues 26 to 308 lie on the Lumenal side of the membrane; sequence DSFRELPFVF…NSKEQDCPAV (283 aa). 3 N-linked (GlcNAc...) asparagine glycosylation sites follow: asparagine 128, asparagine 172, and asparagine 229.

The protein belongs to the glycosyltransferase 31 family. In terms of tissue distribution, expressed in brain and kidney.

Its subcellular location is the golgi apparatus membrane. It carries out the reaction a globoside Gb4Cer (d18:1(4E)) + UDP-alpha-D-galactose = a globoside GalGb4Cer (d18:1(4E)) + UDP + H(+). The protein operates within protein modification; protein glycosylation. In terms of biological role, catalyzes the transfer of Gal to GlcNAc-based acceptors with a preference for the core3 O-linked glycan GlcNAc(beta1,3)GalNAc structure. Can use glycolipid LC3Cer as an efficient acceptor. Also catalyzes the transfer of Gal to the terminal GalNAc unit of the globoside GB4, thereby synthesizing the glycolipid GB5, also known as the stage-specific embryonic antigen-3 (SSEA-3). The chain is Beta-1,3-galactosyltransferase 5 from Mus musculus (Mouse).